Here is a 467-residue protein sequence, read N- to C-terminus: Argininosuccinate lyase (467 aa).

Belongs to the lyase 1 family. Argininosuccinate lyase subfamily.

The protein resides in the cytoplasm. It carries out the reaction 2-(N(omega)-L-arginino)succinate = fumarate + L-arginine. Its pathway is amino-acid biosynthesis; L-arginine biosynthesis; L-arginine from L-ornithine and carbamoyl phosphate: step 3/3. The sequence is that of Argininosuccinate lyase from Thioalkalivibrio sulfidiphilus (strain HL-EbGR7).